A 137-amino-acid chain; its full sequence is Mandibular organ-inhibiting hormone (137 aa).

The N-terminal stretch at 1–26 is a signal peptide; sequence MTTKCTVMAVVLAACICLQVLPQAYG. Gln63 is subject to Pyrrolidone carboxylic acid. 3 disulfide bridges follow: Cys69–Cys105, Cys85–Cys101, and Cys88–Cys114. Val134 carries the valine amide modification.

The protein belongs to the arthropod CHH/MIH/GIH/VIH hormone family. In terms of tissue distribution, produced by the medulla terminalis X-organ in the eyestalks and transported to the sinus gland where it is stored and released.

The protein localises to the secreted. In terms of biological role, represses the synthesis of methyl farnesoate, the precursor of insect juvenile hormone III in the mandibular organ. Also has hyperglycemic activity. The chain is Mandibular organ-inhibiting hormone from Libinia emarginata (Portly spider crab).